A 152-amino-acid chain; its full sequence is Transcriptional regulator MraZ (152 aa).

2 SpoVT-AbrB domains span residues 5-51 and 80-123; these read VNSI…PLPE and AAEC…DEVL.

It belongs to the MraZ family. As to quaternary structure, forms oligomers.

It is found in the cytoplasm. The protein resides in the nucleoid. This chain is Transcriptional regulator MraZ, found in Methylococcus capsulatus (strain ATCC 33009 / NCIMB 11132 / Bath).